We begin with the raw amino-acid sequence, 432 residues long: MYYCISFTHKNTDIALREKLSFSNEAKKGEFLKIISTHENIEECLVISTCNRVEIVAFVKMACAEFIVKSLALLCDVDKDILLEKADIFEDSGAIHHLFSVASSLDSLVVGETQIAGQLKDAFAFAVKNNFCGVHLSRAVHSAFKCAAKVRNETQISKNSISVASVAVAKAKELADLTQKKAVVIGAGEMGELAAKHLIAAGAKVIILNRDLQKAKDLCERLGVLSEYDSLENLKKYLNQYEFFFSATNAPNAIITNSLIEELSYKRYFFDIAVPRDIDINENENISVFAVDDLEIVVQKNLALREQEARMAYGIIGRETSEFFRYLNDLALMPIIKAIRLQAKEYADKQLEIALKKGYLKKSDKEEARKLIHQVFKAFLHTPTVNLKHLQGKMQSDTVINAMRYVFDLQNNLEGLNQYKCEFDMENNDEIY.

Substrate-binding positions include 49–52 (TCNR), S107, 112–114 (ETQ), and Q118. C50 (nucleophile) is an active-site residue. 186–191 (GAGEMG) serves as a coordination point for NADP(+).

The protein belongs to the glutamyl-tRNA reductase family. As to quaternary structure, homodimer.

The catalysed reaction is (S)-4-amino-5-oxopentanoate + tRNA(Glu) + NADP(+) = L-glutamyl-tRNA(Glu) + NADPH + H(+). The protein operates within porphyrin-containing compound metabolism; protoporphyrin-IX biosynthesis; 5-aminolevulinate from L-glutamyl-tRNA(Glu): step 1/2. Functionally, catalyzes the NADPH-dependent reduction of glutamyl-tRNA(Glu) to glutamate 1-semialdehyde (GSA). This chain is Glutamyl-tRNA reductase, found in Campylobacter jejuni subsp. jejuni serotype O:2 (strain ATCC 700819 / NCTC 11168).